A 567-amino-acid polypeptide reads, in one-letter code: UPF0313 protein Tpet_0582 (567 aa).

The Radical SAM core domain occupies 288–560; sequence KAIETVKFSI…NKMKENVLFK (273 aa). Cys303, Cys307, and Cys310 together coordinate [4Fe-4S] cluster.

It belongs to the UPF0313 family. [4Fe-4S] cluster is required as a cofactor.

In Thermotoga petrophila (strain ATCC BAA-488 / DSM 13995 / JCM 10881 / RKU-1), this protein is UPF0313 protein Tpet_0582.